Here is a 98-residue protein sequence, read N- to C-terminus: NADH-ubiquinone oxidoreductase chain 4L (98 aa).

Transmembrane regions (helical) follow at residues 1-21 (MIPTYMNIMLAFTISLLGMLT), 27-47 (VASLLCLEGMMMSLFIMATLI), and 61-81 (IILLVFAACEAAVGLALLISI).

It belongs to the complex I subunit 4L family. In terms of assembly, core subunit of respiratory chain NADH dehydrogenase (Complex I) which is composed of 45 different subunits.

Its subcellular location is the mitochondrion inner membrane. It catalyses the reaction a ubiquinone + NADH + 5 H(+)(in) = a ubiquinol + NAD(+) + 4 H(+)(out). In terms of biological role, core subunit of the mitochondrial membrane respiratory chain NADH dehydrogenase (Complex I) which catalyzes electron transfer from NADH through the respiratory chain, using ubiquinone as an electron acceptor. Part of the enzyme membrane arm which is embedded in the lipid bilayer and involved in proton translocation. This is NADH-ubiquinone oxidoreductase chain 4L (MT-ND4L) from Macaca hecki (Heck's macaque).